Here is a 123-residue protein sequence, read N- to C-terminus: Small ribosomal subunit protein uS12 (123 aa).

The residue at position 89 (Asp89) is a 3-methylthioaspartic acid.

It belongs to the universal ribosomal protein uS12 family. As to quaternary structure, part of the 30S ribosomal subunit. Contacts proteins S8 and S17. May interact with IF1 in the 30S initiation complex.

Functionally, with S4 and S5 plays an important role in translational accuracy. Its function is as follows. Interacts with and stabilizes bases of the 16S rRNA that are involved in tRNA selection in the A site and with the mRNA backbone. Located at the interface of the 30S and 50S subunits, it traverses the body of the 30S subunit contacting proteins on the other side and probably holding the rRNA structure together. The combined cluster of proteins S8, S12 and S17 appears to hold together the shoulder and platform of the 30S subunit. This is Small ribosomal subunit protein uS12 from Nitrobacter hamburgensis (strain DSM 10229 / NCIMB 13809 / X14).